We begin with the raw amino-acid sequence, 732 residues long: Elongation factor 2 (732 aa).

In terms of domain architecture, tr-type G spans 19-228; it reads ELVRNIGIVA…TKITFKDIVE (210 aa). GTP is bound by residues 28-35, 94-98, and 148-151; these read AHIDHGKT, DTPGH, and NKID. The residue at position 598 (His598) is a Diphthamide.

This sequence belongs to the TRAFAC class translation factor GTPase superfamily. Classic translation factor GTPase family. EF-G/EF-2 subfamily.

The protein localises to the cytoplasm. Functionally, catalyzes the GTP-dependent ribosomal translocation step during translation elongation. During this step, the ribosome changes from the pre-translocational (PRE) to the post-translocational (POST) state as the newly formed A-site-bound peptidyl-tRNA and P-site-bound deacylated tRNA move to the P and E sites, respectively. Catalyzes the coordinated movement of the two tRNA molecules, the mRNA and conformational changes in the ribosome. This chain is Elongation factor 2, found in Thermoplasma volcanium (strain ATCC 51530 / DSM 4299 / JCM 9571 / NBRC 15438 / GSS1).